We begin with the raw amino-acid sequence, 736 residues long: Glycogen [starch] synthase, muscle (736 aa).

Position 8 is a phosphoserine; by AMPK and PKA (S8). Position 11 is a phosphoserine (S11). K39 is a UDP binding site. UDP-alpha-D-glucose contacts are provided by H205 and R211. Alpha-D-glucose 6-phosphate-binding residues include H291, E292, Q294, H297, and K301. R331 contributes to the UDP binding site. R331 lines the UDP-alpha-D-glucose pocket. S412 carries the phosphoserine modification. Residue H501 coordinates alpha-D-glucose 6-phosphate. E510, W512, and G513 together coordinate UDP-alpha-D-glucose. T515 provides a ligand contact to UDP. Alpha-D-glucose 6-phosphate contacts are provided by R582 and R586. The segment at 631 to 736 (TQGYRYPRPA…PASSLGEERN (106 aa)) is disordered. Phosphoserine; by DYRK2, GSK3-alpha, GSK3-beta and PASK is present on S641. Phosphoserine; by GSK3-alpha and GSK3-beta occurs at positions 645 and 649. The residue at position 652 (S652) is a Phosphoserine. S653 carries the post-translational modification Phosphoserine; by GSK3-alpha and GSK3-beta. Phosphoserine; by CK2 is present on S657. The segment covering 658–681 (EDEEEPRDLPPDEDDERYDEDEEA) has biased composition (acidic residues). A compositionally biased stretch (basic and acidic residues) spans 682–695 (AKDRRNIRAPEWPR). S698 carries the phosphoserine modification. T700 carries the post-translational modification Phosphothreonine. S709 bears the Phosphoserine mark. The span at 714–727 (PSSSVSTPSEPLSP) shows a compositional bias: low complexity. T720 carries the post-translational modification Phosphothreonine. Phosphoserine occurs at positions 726 and 730.

This sequence belongs to the glycosyltransferase 3 family. In terms of assembly, part of the GYS1-GYG1 complex, a heterooctamer composed of a tetramer of GYS1 and 2 dimers of GYG1, where each GYS1 protomer binds to one GYG1 subunit (via GYG1 C-terminus); the GYS1 tetramer may dissociate from GYG1 dimers to continue glycogen polymerization on its own. Phosphorylation at Ser-8 by AMPK inactivates the enzyme activity. Primed phosphorylation at Ser-657 (site 5) by CSNK2A1 and CSNK2A2 is required for inhibitory phosphorylation at Ser-641 (site 3a), Ser-645 (site 3b), Ser-649 (site 3c) and Ser-653 (site 4) by GSK3A an GSK3B. Phosphorylated at Ser-641 by PASK, leading to inactivation; phosphorylation by PASK is inhibited by glycogen. Phosphorylated at Ser-641 by DYRK2, leading to inactivation. Dephosphorylation at Ser-641 and Ser-645 by PP1 activates the enzyme.

The enzyme catalyses [(1-&gt;4)-alpha-D-glucosyl](n) + UDP-alpha-D-glucose = [(1-&gt;4)-alpha-D-glucosyl](n+1) + UDP + H(+). The protein operates within glycan biosynthesis; glycogen biosynthesis. With respect to regulation, allosteric activation by glucose-6-phosphate. Phosphorylation reduces the activity towards UDP-glucose. When in the non-phosphorylated state, glycogen synthase does not require glucose-6-phosphate as an allosteric activator; when phosphorylated it does. In terms of biological role, glycogen synthase participates in the glycogen biosynthetic process along with glycogenin and glycogen branching enzyme. Extends the primer composed of a few glucose units formed by glycogenin by adding new glucose units to it. In this context, glycogen synthase transfers the glycosyl residue from UDP-Glc to the non-reducing end of alpha-1,4-glucan. The sequence is that of Glycogen [starch] synthase, muscle (GYS1) from Bos taurus (Bovine).